Here is a 314-residue protein sequence, read N- to C-terminus: Dihydropteroate synthase (314 aa).

Residues 10 to 294 (TVICGIINVT…DVASHRMAVE (285 aa)) form the Pterin-binding domain. N17 provides a ligand contact to Mg(2+). (7,8-dihydropterin-6-yl)methyl diphosphate is bound by residues T57, D91, N110, D201, K237, and 282-284 (RVH).

This sequence belongs to the DHPS family. In terms of assembly, homodimer or homotrimer. Mg(2+) serves as cofactor.

The enzyme catalyses (7,8-dihydropterin-6-yl)methyl diphosphate + 4-aminobenzoate = 7,8-dihydropteroate + diphosphate. It participates in cofactor biosynthesis; tetrahydrofolate biosynthesis; 7,8-dihydrofolate from 2-amino-4-hydroxy-6-hydroxymethyl-7,8-dihydropteridine diphosphate and 4-aminobenzoate: step 1/2. In terms of biological role, catalyzes the condensation of para-aminobenzoate (pABA) with 6-hydroxymethyl-7,8-dihydropterin diphosphate (DHPt-PP) to form 7,8-dihydropteroate (H2Pte), the immediate precursor of folate derivatives. The protein is Dihydropteroate synthase (sulA) of Streptococcus pneumoniae serotype 4 (strain ATCC BAA-334 / TIGR4).